A 453-amino-acid chain; its full sequence is Homogentisate 1,2-dioxygenase (453 aa).

The active-site Proton acceptor is the His306. Residues His349 and Glu355 each coordinate Fe cation. Homogentisate is bound by residues Tyr364 and His385. A Fe cation-binding site is contributed by His385.

It belongs to the homogentisate dioxygenase family. Hexamer; dimer of trimers. Fe cation serves as cofactor.

It carries out the reaction homogentisate + O2 = 4-maleylacetoacetate + H(+). It functions in the pathway amino-acid degradation; L-phenylalanine degradation; acetoacetate and fumarate from L-phenylalanine: step 4/6. Involved in the catabolism of homogentisate (2,5-dihydroxyphenylacetate or 2,5-OH-PhAc), a central intermediate in the degradation of phenylalanine and tyrosine. Catalyzes the oxidative ring cleavage of the aromatic ring of homogentisate to yield maleylacetoacetate. This Rhizobium etli (strain CIAT 652) protein is Homogentisate 1,2-dioxygenase.